The sequence spans 360 residues: UDP-N-acetylglucosamine--N-acetylmuramyl-(pentapeptide) pyrophosphoryl-undecaprenol N-acetylglucosamine transferase (360 aa).

Residues 15-17 (TGG), N128, R164, S192, I247, and Q292 each bind UDP-N-acetyl-alpha-D-glucosamine.

This sequence belongs to the glycosyltransferase 28 family. MurG subfamily.

The protein resides in the cell inner membrane. It carries out the reaction di-trans,octa-cis-undecaprenyl diphospho-N-acetyl-alpha-D-muramoyl-L-alanyl-D-glutamyl-meso-2,6-diaminopimeloyl-D-alanyl-D-alanine + UDP-N-acetyl-alpha-D-glucosamine = di-trans,octa-cis-undecaprenyl diphospho-[N-acetyl-alpha-D-glucosaminyl-(1-&gt;4)]-N-acetyl-alpha-D-muramoyl-L-alanyl-D-glutamyl-meso-2,6-diaminopimeloyl-D-alanyl-D-alanine + UDP + H(+). It participates in cell wall biogenesis; peptidoglycan biosynthesis. Cell wall formation. Catalyzes the transfer of a GlcNAc subunit on undecaprenyl-pyrophosphoryl-MurNAc-pentapeptide (lipid intermediate I) to form undecaprenyl-pyrophosphoryl-MurNAc-(pentapeptide)GlcNAc (lipid intermediate II). This is UDP-N-acetylglucosamine--N-acetylmuramyl-(pentapeptide) pyrophosphoryl-undecaprenol N-acetylglucosamine transferase from Blochmanniella floridana.